Consider the following 364-residue polypeptide: UDP-N-acetylglucosamine--N-acetylmuramyl-(pentapeptide) pyrophosphoryl-undecaprenol N-acetylglucosamine transferase (364 aa).

UDP-N-acetyl-alpha-D-glucosamine-binding positions include 19–21 (TGG), Asn-131, Arg-167, Ser-195, Ile-250, and Gln-295.

Belongs to the glycosyltransferase 28 family. MurG subfamily.

Its subcellular location is the cell inner membrane. The enzyme catalyses di-trans,octa-cis-undecaprenyl diphospho-N-acetyl-alpha-D-muramoyl-L-alanyl-D-glutamyl-meso-2,6-diaminopimeloyl-D-alanyl-D-alanine + UDP-N-acetyl-alpha-D-glucosamine = di-trans,octa-cis-undecaprenyl diphospho-[N-acetyl-alpha-D-glucosaminyl-(1-&gt;4)]-N-acetyl-alpha-D-muramoyl-L-alanyl-D-glutamyl-meso-2,6-diaminopimeloyl-D-alanyl-D-alanine + UDP + H(+). The protein operates within cell wall biogenesis; peptidoglycan biosynthesis. Its function is as follows. Cell wall formation. Catalyzes the transfer of a GlcNAc subunit on undecaprenyl-pyrophosphoryl-MurNAc-pentapeptide (lipid intermediate I) to form undecaprenyl-pyrophosphoryl-MurNAc-(pentapeptide)GlcNAc (lipid intermediate II). This is UDP-N-acetylglucosamine--N-acetylmuramyl-(pentapeptide) pyrophosphoryl-undecaprenol N-acetylglucosamine transferase from Xylella fastidiosa (strain Temecula1 / ATCC 700964).